We begin with the raw amino-acid sequence, 442 residues long: Lipoyl synthase, apicoplast (442 aa).

A signal peptide spans 1 to 23; sequence MRVLTPSLYIYAFFIFCVRFKCG. The segment at 104–154 is disordered; the sequence is LGEHQLKGKRKESATNVEKEKKEKEQQEERLPVPKVGNKMPEKKPDWFHVP. Basic and acidic residues predominate over residues 114–135; the sequence is KESATNVEKEKKEKEQQEERLP. Residues Cys177, Cys182, Cys188, Cys203, Cys207, Cys210, and Ser418 each contribute to the [4Fe-4S] cluster site. Positions 189–407 constitute a Radical SAM core domain; sequence WNIGTATIML…KEEGMKMGFK (219 aa).

It belongs to the radical SAM superfamily. Lipoyl synthase family. It depends on [4Fe-4S] cluster as a cofactor.

Its subcellular location is the plastid. The protein localises to the apicoplast. The catalysed reaction is [[Fe-S] cluster scaffold protein carrying a second [4Fe-4S](2+) cluster] + N(6)-octanoyl-L-lysyl-[protein] + 2 oxidized [2Fe-2S]-[ferredoxin] + 2 S-adenosyl-L-methionine + 4 H(+) = [[Fe-S] cluster scaffold protein] + N(6)-[(R)-dihydrolipoyl]-L-lysyl-[protein] + 4 Fe(3+) + 2 hydrogen sulfide + 2 5'-deoxyadenosine + 2 L-methionine + 2 reduced [2Fe-2S]-[ferredoxin]. It participates in protein modification; protein lipoylation via endogenous pathway; protein N(6)-(lipoyl)lysine from octanoyl-[acyl-carrier-protein]: step 2/2. Its function is as follows. Catalyzes the radical-mediated insertion of two sulfur atoms into the C-6 and C-8 positions of the octanoyl moiety bound to the lipoyl domains of lipoate-dependent enzymes, thereby converting the octanoylated domains into lipoylated derivatives. The sequence is that of Lipoyl synthase, apicoplast from Plasmodium knowlesi (strain H).